The sequence spans 170 residues: Probable phospholipid hydroperoxide glutathione peroxidase (170 aa).

The active site involves Cys44.

Belongs to the glutathione peroxidase family.

It is found in the cytoplasm. It carries out the reaction a hydroperoxy polyunsaturated fatty acid + 2 glutathione = a hydroxy polyunsaturated fatty acid + glutathione disulfide + H2O. Functionally, protects cells and enzymes from oxidative damage, by catalyzing the reduction of hydrogen peroxide, lipid peroxides and organic hydroperoxide, by glutathione. This is Probable phospholipid hydroperoxide glutathione peroxidase (GPXMC1) from Mesembryanthemum crystallinum (Common ice plant).